Here is a 107-residue protein sequence, read N- to C-terminus: Pre-mRNA-splicing factor RDS3 (107 aa).

It belongs to the PHF5 family. As to quaternary structure, component of the spliceosome where it interacts with CUS1, HSH49, HSH155, IST3 and RSE1. Also interacts with YRA1.

Its subcellular location is the nucleus. Functionally, required for pre-mRNA splicing. Involved in regulation of drug sensitivity and may play a role in multidrug resistance. The protein is Pre-mRNA-splicing factor RDS3 (RDS3) of Saccharomyces cerevisiae (strain ATCC 204508 / S288c) (Baker's yeast).